A 140-amino-acid chain; its full sequence is Encapsulated ferritin-like protein (140 aa).

Glu-31 contacts Ca(2+). Fe cation is bound at residue Glu-32. Glu-34 is a binding site for Ca(2+). Residues Glu-62 and His-65 each contribute to the Fe cation site. Residues 100–140 form a disordered region; it reads ADTAGEGSGGDAAKGATAQGDGSLGIGSLKGEAALARPPRL. Residues 100–140 form a targeting peptide region; sequence ADTAGEGSGGDAAKGATAQGDGSLGIGSLKGEAALARPPRL.

It belongs to the ferritin-like superfamily. EncFtn family. Monomers form antiparallel dimers which assemble in a decameric ring 7 nm in diameter and 4.5 nm thick with a central channel (construct without targeting peptide). Growth in Fe(2+)-rich medium induces oligomerization, the monomer does not bind metals. The target peptide probably extends away from the ring, to allow binding to the interior of the encapsulin nanocompartment shell. Requires Fe(2+) as cofactor. Ca(2+) serves as cofactor.

The protein resides in the encapsulin nanocompartment. It carries out the reaction 4 Fe(2+) + O2 + 4 H(+) = 4 Fe(3+) + 2 H2O. With respect to regulation, ferroxidase activity inhibited by Zn(2+). Mutants at Glu-31, Glu-34 and Trp-38 are also inhibited by Zn(2+). Functionally, cargo protein of a type 1 encapsulin nanocompartment. A ferritin-like ferroxidase that mineralizes iron inside the encapsulin nanocompartment. Converts Fe(2+) to Fe(3+) that is released to the exterior of the decameric complex for deposition in the encapsulin nanocompartment. In solution the decamer binds 10-15 iron cations; in the encapsulin nanocompartment the decamer can bind up to 48 ions, perhaps via its internal channel and on its exterior. The empty encapsulin nanocompartment sequesters about 2200 Fe ions while the cargo-loaded nanocompartment can maximally sequester about 4150 Fe ions. EncFtn retains ferroxidase activity when encapsulated. Flux in the active site di-iron metal center is thought to be controlled by the 'entry site' of the protein, which both attracts metal and controls the rate of iron oxidation. Encapsulation in the nanocompartment does not alter either function of this protein. The chain is Encapsulated ferritin-like protein from Rhodospirillum rubrum (strain ATCC 11170 / ATH 1.1.1 / DSM 467 / LMG 4362 / NCIMB 8255 / S1).